The following is a 60-amino-acid chain: MSQLKVTLIKSAAHRLPKQRTIVKELGLGRVNSSVVLPNNEATRGAIFHIAHLIEVEEVK.

This sequence belongs to the universal ribosomal protein uL30 family. As to quaternary structure, part of the 50S ribosomal subunit.

In Pediococcus pentosaceus (strain ATCC 25745 / CCUG 21536 / LMG 10740 / 183-1w), this protein is Large ribosomal subunit protein uL30.